We begin with the raw amino-acid sequence, 168 residues long: D-aminoacyl-tRNA deacylase 2 (168 aa).

The Gly-transPro motif, allows the protein to recognize chirality of D-amino acids signature appears at 160–161 (GP).

Belongs to the DTD family. Homodimer.

The protein localises to the cytoplasm. It carries out the reaction a D-aminoacyl-tRNA + H2O = a tRNA + a D-alpha-amino acid + H(+). It catalyses the reaction glycyl-tRNA(Ala) + H2O = tRNA(Ala) + glycine + H(+). The catalysed reaction is D-tyrosyl-tRNA(Tyr) + H2O = D-tyrosine + tRNA(Tyr). The enzyme catalyses L-alanyl-tRNA(Thr) + H2O = tRNA(Thr) + L-alanine + H(+). In terms of biological role, deacylates mischarged D-aminoacyl-tRNAs. Also deacylates mischarged glycyl-tRNA(Ala), protecting cells against glycine mischarging by AlaRS. Probably acts by rejecting L-amino acids from its binding site rather than specific recognition of D-amino acids. Catalyzes the hydrolysis of D-tyrosyl-tRNA(Tyr), has no activity on correctly charged L-tyrosyl-tRNA(Tyr). By recycling D-aminoacyl-tRNA to D-amino acids and free tRNA molecules, this enzyme counteracts the toxicity associated with the formation of D-aminoacyl-tRNA entities in vivo and helps enforce protein L-homochirality. In contrast to DTD1, deacylates L-Ala mischarged on tRNA(Thr)(G4.U69) by alanine-tRNA ligase AARS. Can deacylate L-Ala due to a relaxed specificity for substrate chirality caused by the trans conformation of the Gly-Pro motif in the active site. Also hydrolyzes correctly charged, achiral, glycyl-tRNA(Gly) in vitro, although in vivo EEF1A1/EF-Tu may protect cognate achiral glycyl-tRNA(Gly) from DTD2-mediated deacetylation. The chain is D-aminoacyl-tRNA deacylase 2 (DTD2) from Homo sapiens (Human).